We begin with the raw amino-acid sequence, 604 residues long: Glutamine--fructose-6-phosphate aminotransferase [isomerizing] (604 aa).

C2 acts as the Nucleophile; for GATase activity in catalysis. Residues 2-218 (CGIVGVVGNT…DKELVIVKKD (217 aa)) enclose the Glutamine amidotransferase type-2 domain. SIS domains lie at 284–423 (IIKS…ANGK) and 456–594 (VEQL…VDKP). The active-site For Fru-6P isomerization activity is K599.

Homodimer.

The protein localises to the cytoplasm. It catalyses the reaction D-fructose 6-phosphate + L-glutamine = D-glucosamine 6-phosphate + L-glutamate. Catalyzes the first step in hexosamine metabolism, converting fructose-6P into glucosamine-6P using glutamine as a nitrogen source. The sequence is that of Glutamine--fructose-6-phosphate aminotransferase [isomerizing] from Streptococcus agalactiae serotype III (strain NEM316).